Here is a 315-residue protein sequence, read N- to C-terminus: Transcription factor MafAa (315 aa).

A compositionally biased stretch (low complexity) spans 52–104 (STPISTPCSSVPSSPSFCAPSPGSQPGQNLVNGVNNNNNNSGNGNNNTQGSSG). Disordered regions lie at residues 52–108 (STPI…KPQM) and 169–191 (ATNG…AHAR). Basic residues predominate over residues 172–189 (GHHHPVHHHHHHHGHHAH). A basic motif region spans residues 223-248 (RLKQKRRTLKNRGYAQSCRYKRVQQR). A bZIP domain is found at 223–286 (RLKQKRRTLK…DLYKEKYEKL (64 aa)). The segment at 229–243 (RTLKNRGYAQSCRYK) is interaction with DNA. Residues 251–272 (LESEKCTLQSQVEQLKQDVARL) form a leucine-zipper region. The interval 290–315 (AFNGGGNTRDPSSGNHVKTTSTDFFM) is disordered. Residues 298 to 315 (RDPSSGNHVKTTSTDFFM) are compositionally biased toward polar residues.

This sequence belongs to the bZIP family. Maf subfamily.

The protein resides in the nucleus. In terms of biological role, transcription factor, possibly involved in transcription regulation during lens development, including that of crystallin genes. Specifically binds to the alphaCE2 enhancer element of crystallin gene. This Danio rerio (Zebrafish) protein is Transcription factor MafAa (mafaa).